A 149-amino-acid polypeptide reads, in one-letter code: Calmodulin (149 aa).

EF-hand domains follow at residues 8–43 (QQIA…LGQN), 44–79 (PSES…KMKD), 81–116 (DSEA…IGEK), and 117–149 (LSDA…LAAK). 20 residues coordinate Ca(2+): D21, D23, D25, K27, E32, D57, N59, D61, S63, E68, D94, N96, D98, K100, E105, D130, N132, D134, E136, and E141.

This sequence belongs to the calmodulin family.

Functionally, calmodulin mediates the control of a large number of enzymes, ion channels and other proteins by Ca(2+). Among the enzymes to be stimulated by the calmodulin-Ca(2+) complex are a number of protein kinases and phosphatases. This Candida albicans (Yeast) protein is Calmodulin (CMD1).